The sequence spans 299 residues: Acetylglutamate kinase (299 aa).

Residues 68–69, Arg-90, and Asn-194 each bind substrate; that span reads GG.

The protein belongs to the acetylglutamate kinase family. ArgB subfamily.

The protein resides in the cytoplasm. It carries out the reaction N-acetyl-L-glutamate + ATP = N-acetyl-L-glutamyl 5-phosphate + ADP. It functions in the pathway amino-acid biosynthesis; L-arginine biosynthesis; N(2)-acetyl-L-ornithine from L-glutamate: step 2/4. Catalyzes the ATP-dependent phosphorylation of N-acetyl-L-glutamate. This is Acetylglutamate kinase from Psychrobacter cryohalolentis (strain ATCC BAA-1226 / DSM 17306 / VKM B-2378 / K5).